We begin with the raw amino-acid sequence, 450 residues long: Phosphoglucosamine mutase (450 aa).

Residue S97 is the Phosphoserine intermediate of the active site. S97, D236, D238, and D240 together coordinate Mg(2+). Position 97 is a phosphoserine (S97).

Belongs to the phosphohexose mutase family. The cofactor is Mg(2+). Activated by phosphorylation.

It catalyses the reaction alpha-D-glucosamine 1-phosphate = D-glucosamine 6-phosphate. Its function is as follows. Catalyzes the conversion of glucosamine-6-phosphate to glucosamine-1-phosphate. The chain is Phosphoglucosamine mutase from Prochlorococcus marinus (strain MIT 9312).